Reading from the N-terminus, the 341-residue chain is 2-dehydro-3-deoxy-L-galactonate 5-dehydrogenase (341 aa).

Cys-37 contributes to the Zn(2+) binding site. Residues Thr-39 and His-42 each act as charge relay system in the active site. The Zn(2+) site is built by His-60, Glu-61, Cys-90, Cys-93, Cys-96, and Cys-104.

It belongs to the zinc-containing alcohol dehydrogenase family. Zn(2+) is required as a cofactor.

The enzyme catalyses 2-dehydro-3-deoxy-L-galactonate + NAD(+) = 3-deoxy-D-glycero-2,5-hexodiulosonate + NADH + H(+). Functionally, involved in the degradation of 3,6-anhydro-L-galactose, which is the major monomeric sugar of red macroalgae. Catalyzes the third step of the pathway, the NAD(+)-dependent oxidation of 2-dehydro-3-deoxy-L-galactonate (L-KDGal) to 3-deoxy-D-glycero-2,5-hexodiulosonate (L-DDGal). The polypeptide is 2-dehydro-3-deoxy-L-galactonate 5-dehydrogenase (Pseudoalteromonas atlantica (strain T6c / ATCC BAA-1087)).